Here is a 168-residue protein sequence, read N- to C-terminus: PTS system glucose-specific EIIA component (168 aa).

In terms of domain architecture, PTS EIIA type-1 spans 38–142 (DEVFSNKIVG…STLTPVIISN (105 aa)). 2 residues coordinate Zn(2+): His75 and His90. Residue His90 is the Tele-phosphohistidine intermediate; for EIIA activity of the active site. His90 is modified (phosphohistidine; by HPr).

Requires Zn(2+) as cofactor.

It localises to the cytoplasm. Its function is as follows. The phosphoenolpyruvate-dependent sugar phosphotransferase system (sugar PTS), a major carbohydrate active transport system, catalyzes the phosphorylation of incoming sugar substrates concomitantly with their translocation across the cell membrane. The enzyme II complex composed of PtsG and Crr is involved in glucose transport. This Buchnera aphidicola subsp. Baizongia pistaciae (strain Bp) protein is PTS system glucose-specific EIIA component (crr).